Reading from the N-terminus, the 209-residue chain is C-type lectin domain family 6 member A (209 aa).

Over 1 to 20 (MVQERQSQGKGVCWTLRLWS) the chain is Cytoplasmic. The chain crosses the membrane as a helical; Signal-anchor for type II membrane protein span at residues 21–43 (AAVISMLLLSTCFIASCVVTYQF). Residues 44-209 (IMDQPSRRLY…SICEMKKIYL (166 aa)) lie on the Extracellular side of the membrane. Intrachain disulfides connect cysteine 64–cysteine 78, cysteine 79–cysteine 90, cysteine 107–cysteine 202, and cysteine 176–cysteine 194. The C-type lectin domain occupies 86 to 203 (FGSSCYLIST…CDSKHNSICE (118 aa)). Residues valine 116, asparagine 118, and glutamate 122 each contribute to the Ca(2+) site. A glycan (N-linked (GlcNAc...) asparagine) is linked at asparagine 131. Ca(2+) contacts are provided by glutamate 168, asparagine 170, and glutamate 174. Alpha-D-mannopyranose is bound by residues 168 to 170 (EPN), glutamate 174, tryptophan 182, and 190 to 191 (ND). Ca(2+)-binding residues include asparagine 190, aspartate 191, and glutamate 203.

In terms of assembly, associated with FCER1G. Heterodimer with CLEC4D; this heterodimer forms a pattern recognition receptor (PRR) against fungal infection. As to expression, expressed by the XS52 DC (dendritic cell) line (at protein level). Expressed constitutively by the epidermis, and skin resident DC appear to be the major source of this expression. Expressed in the spleen and thymus. Expression was undetectable in non-DC lines, including macrophage lines (J774 and Raw), T-cell lines (7-17, HDK-1, and D10), B-cell hybridoma (5C5), a keratinocyte line (Pam 212), and a fibroblast line (NS01).

It is found in the cell membrane. Calcium-dependent lectin that acts as a pattern recognition receptor (PRR) of the innate immune system: specifically recognizes and binds alpha-mannans on C.albicans hypheas. Binding of C.albicans alpha-mannans to this receptor complex leads to phosphorylation of the immunoreceptor tyrosine-based activation motif (ITAM) of FCER1G, triggering activation of SYK, CARD9 and NF-kappa-B, consequently driving maturation of antigen-presenting cells and shaping antigen-specific priming of T-cells toward effector T-helper 1 and T-helper 17 cell subtypes. Also recognizes, in a mannose-dependent manner, allergens from house dust mite and fungi, by promoting cysteinyl leukotriene production. Recognizes soluble elements from the eggs of Shistosoma mansoni altering adaptive immune responses. In Mus musculus (Mouse), this protein is C-type lectin domain family 6 member A.